The following is a 304-amino-acid chain: Putative AraC-like transcription regulator (304 aa).

Positions 202–300 constitute an HTH araC/xylS-type domain; the sequence is ATALTCLHRD…GMPPGDYRKH (99 aa). 2 DNA-binding regions (H-T-H motif) span residues 219–240 and 267–290; these read ADLADTAAVSRSTLAARFKATV and LASIAHSVGYGSESALSVAFKRVL.

This chain is Putative AraC-like transcription regulator, found in Streptomyces lividans.